Reading from the N-terminus, the 88-residue chain is UPF0298 protein BA_4142/GBAA_4142/BAS3844 (88 aa).

It belongs to the UPF0298 family.

The protein localises to the cytoplasm. The polypeptide is UPF0298 protein BA_4142/GBAA_4142/BAS3844 (Bacillus anthracis).